The chain runs to 148 residues: MKVIFLKDVKGKGKKGETKNVADGYANNFLIKNGYAVEASNAALSTLSAQKKKEDKLAAEELAEAKALKEKMEKLTVELKAKSGEGGRLFGSITSKQIAQTLEKTHGIKVDKRKMDLPEAIRALGHTKVPVKLHHEVTATLDVHVSEE.

The protein belongs to the bacterial ribosomal protein bL9 family.

In terms of biological role, binds to the 23S rRNA. This chain is Large ribosomal subunit protein bL9, found in Listeria innocua serovar 6a (strain ATCC BAA-680 / CLIP 11262).